The chain runs to 449 residues: Heterogeneous nuclear ribonucleoprotein H2 (449 aa).

Met-1 bears the N-acetylmethionine mark. Met-2 is modified (N-acetylmethionine; in Heterogeneous nuclear ribonucleoprotein H2, N-terminally processed). The 80-residue stretch at 11–90 (FVVKVRGLPW…RYVEVFKSNS (80 aa)) folds into the RRM 1 domain. Ser-23 is subject to Phosphoserine. Lys-35 is covalently cross-linked (Glycyl lysine isopeptide (Lys-Gly) (interchain with G-Cter in SUMO2)). Residues Ser-54 and Ser-63 each carry the phosphoserine modification. Lys-87 is covalently cross-linked (Glycyl lysine isopeptide (Lys-Gly) (interchain with G-Cter in SUMO2)). Ser-90 bears the Phosphoserine mark. A Glycyl lysine isopeptide (Lys-Gly) (interchain with G-Cter in SUMO2) cross-link involves residue Lys-98. The RRM 2 domain maps to 111–188 (GFVRLRGLPF…RYIEIFKSSR (78 aa)). Arg-233 carries the post-translational modification Dimethylated arginine; alternate. An Omega-N-methylarginine; alternate modification is found at Arg-233. The stretch at 234–249 (GAYGGGYGGYDDYGGY) is one 1-1 repeat. A 2 X 16 AA Gly-rich approximate repeats region spans residues 234-433 (GAYGGGYGGY…YGGQSSMSGY (200 aa)). At Tyr-246 the chain carries Phosphotyrosine. Positions 289–364 (HCVHMRGLPY…RYVELFLNST (76 aa)) constitute an RRM 3 domain. Phosphoserine is present on Ser-310. Repeat copies occupy residues 354–372 (HRYV…GGAY), 374–392 (HSYV…GGAY), and 418–433 (AGYG…MSGY). The interval 354–392 (HRYVELFLNSTAGTSGGAYDHSYVELFLNSTAGASGGAY) is 2 X 19 AA perfect repeats.

As to quaternary structure, component of a ribonucleoprotein complex containing mRNAs and RNA-binding proteins including DDX5, HNRNPH2 and SRSF1 as well as splicing regulator ARVCF. Interacts with TXNL4/DIM1.

It localises to the nucleus. The protein resides in the nucleoplasm. Functionally, this protein is a component of the heterogeneous nuclear ribonucleoprotein (hnRNP) complexes which provide the substrate for the processing events that pre-mRNAs undergo before becoming functional, translatable mRNAs in the cytoplasm. Binds poly(RG). The chain is Heterogeneous nuclear ribonucleoprotein H2 (Hnrnph2) from Rattus norvegicus (Rat).